The primary structure comprises 359 residues: Pyruvate dehydrogenase E1 component subunit beta, mitochondrial (359 aa).

The N-terminal 30 residues, 1–30, are a transit peptide targeting the mitochondrion; that stretch reads MAAVSGLVRRPLREVSGLLKRRFHWTAPAA. The residue at position 67 (Tyr-67) is a Phosphotyrosine. Glu-89 is a binding site for thiamine diphosphate. The K(+) site is built by Ile-142, Ala-190, Ile-191, Asp-193, and Asn-195. The residue at position 354 (Lys-354) is an N6-acetyllysine.

In terms of assembly, heterotetramer of two PDHA1 and two PDHB subunits. The heterotetramer interacts with DLAT, and is part of the multimeric pyruvate dehydrogenase complex that contains multiple copies of pyruvate dehydrogenase (E1), dihydrolipoamide acetyltransferase (DLAT, E2) and lipoamide dehydrogenase (DLD, E3). These subunits are bound to an inner core composed of about 48 DLAT and 12 PDHX molecules. Interacts with DLAT. Thiamine diphosphate is required as a cofactor.

It is found in the mitochondrion matrix. The catalysed reaction is N(6)-[(R)-lipoyl]-L-lysyl-[protein] + pyruvate + H(+) = N(6)-[(R)-S(8)-acetyldihydrolipoyl]-L-lysyl-[protein] + CO2. Its function is as follows. The pyruvate dehydrogenase complex catalyzes the overall conversion of pyruvate to acetyl-CoA and CO(2), and thereby links the glycolytic pathway to the tricarboxylic cycle. The chain is Pyruvate dehydrogenase E1 component subunit beta, mitochondrial (PDHB) from Homo sapiens (Human).